The chain runs to 130 residues: Small ribosomal subunit protein uS8 (130 aa).

The protein belongs to the universal ribosomal protein uS8 family. As to quaternary structure, part of the 30S ribosomal subunit. Contacts proteins S5 and S12.

Its function is as follows. One of the primary rRNA binding proteins, it binds directly to 16S rRNA central domain where it helps coordinate assembly of the platform of the 30S subunit. This Phytoplasma mali (strain AT) protein is Small ribosomal subunit protein uS8.